We begin with the raw amino-acid sequence, 457 residues long: D-hydantoinase (457 aa).

The Zn(2+) site is built by histidine 57 and histidine 59. Residue serine 69 is modified to Phosphoserine. Residue lysine 148 participates in Zn(2+) binding. Lysine 148 carries the N6-carboxylysine modification. Tyrosine 153 provides a ligand contact to substrate. Positions 181 and 237 each coordinate Zn(2+). A substrate-binding site is contributed by threonine 286. Position 313 (aspartate 313) interacts with Zn(2+). Asparagine 335 lines the substrate pocket.

The protein belongs to the metallo-dependent hydrolases superfamily. Hydantoinase/dihydropyrimidinase family. As to quaternary structure, homotetramer. Zn(2+) serves as cofactor. Post-translationally, carboxylation allows a single lysine to coordinate two zinc ions.

Functionally, catalyzes the stereospecific hydrolysis of the cyclic amide bond of D-hydantoin derivatives. This Rhizobium radiobacter (Agrobacterium tumefaciens) protein is D-hydantoinase (hyuA).